The following is a 238-amino-acid chain: MAFTFKQFHIDDMNCGMAVGTDSVVLGAWAQLTAAKTVLDIGAGSGLLSLMAAQRSQAHITSVELDTSAAEACQHNFHNSPWANRLTLVNSSIQDFCQQIEYQEYFDHIICNPPYFEQGTQAIQSQRAMARHTDSLSFTALLDAIHVCLAPQGNASLILPMQSMARFNEILAHSQLSLIEITNLISIVGKSANRVLCVLAHKTHPQIAPKSSDITIRELSGQYTQTMVQLIRDFYLKY.

The protein belongs to the methyltransferase superfamily. tRNA (adenine-N(6)-)-methyltransferase family.

The protein resides in the cytoplasm. It carries out the reaction adenosine(37) in tRNA1(Val) + S-adenosyl-L-methionine = N(6)-methyladenosine(37) in tRNA1(Val) + S-adenosyl-L-homocysteine + H(+). Its function is as follows. Specifically methylates the adenine in position 37 of tRNA(1)(Val) (anticodon cmo5UAC). This chain is tRNA1(Val) (adenine(37)-N6)-methyltransferase, found in Shewanella baltica (strain OS185).